The following is a 300-amino-acid chain: MSIKIELFGITFENPLILASGVVDMTPELLRRAHKEGAGGVVTKSIGIEPRKGYDNPTVVEVPCGLINAMGLPNPGWKAFLEEFEKESFDFPVIVSIFGGNPEEFAFLAEKLERVGDAFELNLSCPHAKGYGLEIGQDPENVYRVVKAVKDVTDKPVIAKLTPNTSDITKLGLAAEKAEADGVSAINTLKAIAIDIYAKRPILSNKFGGYSGPGIKPIALRAVYDLASKLDIPIIGIGGITTWQDAVEFLLAGASAVQIGTAVYLKGFSVFREIAEGIRKYLEEEGFSSVKEIIGLAQKV.

Residues Ser-20 and 44-45 (KS) contribute to the FMN site. Residues Lys-44, 68-72 (NAMGL), and Asn-122 contribute to the substrate site. Asn-122 provides a ligand contact to FMN. Cys-125 (nucleophile) is an active-site residue. Residues Lys-160 and Ile-186 each contribute to the FMN site. 187-188 (NT) contacts substrate. Residues Gly-212, 238 to 239 (GG), and 260 to 261 (GT) contribute to the FMN site.

This sequence belongs to the dihydroorotate dehydrogenase family. Type 1 subfamily. As to quaternary structure, heterotetramer of 2 PyrK and 2 PyrD type B subunits. FMN is required as a cofactor.

The protein localises to the cytoplasm. The enzyme catalyses (S)-dihydroorotate + NAD(+) = orotate + NADH + H(+). It functions in the pathway pyrimidine metabolism; UMP biosynthesis via de novo pathway; orotate from (S)-dihydroorotate (NAD(+) route): step 1/1. Its function is as follows. Catalyzes the conversion of dihydroorotate to orotate with NAD(+) as electron acceptor. The protein is Dihydroorotate dehydrogenase B (NAD(+)), catalytic subunit (pyrD) of Pyrococcus furiosus (strain ATCC 43587 / DSM 3638 / JCM 8422 / Vc1).